A 91-amino-acid chain; its full sequence is Elongation factor 1-beta (91 aa).

This sequence belongs to the EF-1-beta/EF-1-delta family.

Functionally, promotes the exchange of GDP for GTP in EF-1-alpha/GDP, thus allowing the regeneration of EF-1-alpha/GTP that could then be used to form the ternary complex EF-1-alpha/GTP/AAtRNA. This Pyrococcus horikoshii (strain ATCC 700860 / DSM 12428 / JCM 9974 / NBRC 100139 / OT-3) protein is Elongation factor 1-beta (ef1b).